The chain runs to 474 residues: Hepatocyte nuclear factor 4-alpha (474 aa).

The nuclear receptor DNA-binding region spans 57–132 (SALCAICGDR…AGMKKEAVQN (76 aa)). 2 NR C4-type zinc fingers span residues 60–80 (CAIC…CDGC) and 96–120 (CRFS…LKKC). Ser-142 and Ser-143 each carry phosphoserine. Position 144 is a phosphotyrosine (Tyr-144). Residues 147-377 (SSLPSINALL…NLLQEMLLGG (231 aa)) form the NR LBD domain. Residue Thr-166 is modified to Phosphothreonine. Ser-167 carries the post-translational modification Phosphoserine. Glycyl lysine isopeptide (Lys-Gly) (interchain with G-Cter in ubiquitin) cross-links involve residues Lys-234 and Lys-307. Ser-313 is modified (phosphoserine; by AMPK). A 9aaTAD motif is present at residues 368–376 (NLLQEMLLG). Positions 413–450 (SNGQMCEWPRPRGQAATPETPQPSPPSGSGSESYKLLP) are disordered. Phosphothreonine is present on residues Thr-429 and Thr-432. Ser-436 bears the Phosphoserine mark. Position 458 is an N6-acetyllysine (Lys-458).

This sequence belongs to the nuclear hormone receptor family. NR2 subfamily. Homodimerization is required for HNF4-alpha to bind to its recognition site. Interacts with CLOCK, BMAL1 and PER1. Interacts with PER2. Interacts with CRY1 and CRY2. Interacts with NR0B2/SHP; the resulting heterodimer is transcriptionally inactive. Interacts with DDX3X; this interaction disrupts the interaction between HNF4 and NR0B2 that forms inactive heterodimers and enhances the formation of active HNF4 homodimers. In terms of processing, phosphorylated on tyrosine residue(s); phosphorylation is important for its DNA-binding activity. Phosphorylation may directly or indirectly play a regulatory role in the subnuclear distribution. Phosphorylation at Ser-313 by AMPK reduces the ability to form homodimers and bind DNA. Acetylation at Lys-458 lowers transcriptional activation by about two-fold. As to expression, expressed in the liver, pancreas and colon in a circadian manner.

The protein resides in the nucleus. Functionally, transcriptional regulator which controls the expression of hepatic genes during the transition of endodermal cells to hepatic progenitor cells, facilitatating the recruitment of RNA pol II to the promoters of target genes. Activates the transcription of CYP2C38. Represses the CLOCK-BMAL1 transcriptional activity and is essential for circadian rhythm maintenance and period regulation in the liver and colon cells. In Mus musculus (Mouse), this protein is Hepatocyte nuclear factor 4-alpha (Hnf4a).